A 141-amino-acid chain; its full sequence is Vesicle-associated membrane protein 4 (141 aa).

The interval 1-51 (MPPKFKRHLNDDDVTGSVKSERRNLLEDDSDEEEDFFLRGPSGPRFGPRND) is disordered. At 1-115 (MPPKFKRHLN…RRQMWWRGCK (115 aa)) the chain is on the cytoplasmic side. 2 positions are modified to phosphoserine: Ser-17 and Ser-30. Residues 52-112 (KIKHVQNQVD…KQLRRQMWWR (61 aa)) form the v-SNARE coiled-coil homology domain. Residues 116–136 (IKAIMALVAAILLLVIIILIV) traverse the membrane as a helical; Anchor for type IV membrane protein segment. Residues 137 to 141 (MKYRT) are Vesicular-facing.

This sequence belongs to the synaptobrevin family. Identified in a complex containing STX6, STX12, VAMP4 and VTI1A. Interacts with BAIAP3; this interaction is increased in the presence of calcium.

The protein localises to the golgi apparatus. It localises to the trans-Golgi network membrane. Its function is as follows. Involved in the pathway that functions to remove an inhibitor (probably synaptotagmin-4) of calcium-triggered exocytosis during the maturation of secretory granules. May be a marker for this sorting pathway that is critical for remodeling the secretory response of granule. This is Vesicle-associated membrane protein 4 (VAMP4) from Homo sapiens (Human).